The sequence spans 186 residues: Methylamine dehydrogenase light chain (186 aa).

Residues 1–57 (MKKNTGFDSGIEKLARKTASKTGRRSFIGKLGGFLVGSALLPLLPVDRRGRMNEAHA) constitute a signal peptide (tat-type signal). 6 cysteine pairs are disulfide-bonded: Cys-78/Cys-143, Cys-84/Cys-116, Cys-91/Cys-176, Cys-93/Cys-141, Cys-101/Cys-132, and Cys-133/Cys-164. A Tryptophylquinone modification is found at Trp-112. The segment at residues 112–163 (WVASCFNPGDGQTYLIAYRDCCGKQTCGRCNCVNVQGELPVYRPEFNNDIVW) is a cross-link (tryptophan tryptophylquinone (Trp-Trp)).

The protein belongs to the aromatic amine dehydrogenase light chain family. As to quaternary structure, heterotetramer of two light and two heavy chains. It depends on tryptophan tryptophylquinone residue as a cofactor. Post-translationally, predicted to be exported by the Tat system. The position of the signal peptide cleavage has not been experimentally proven. In terms of processing, tryptophan tryptophylquinone (TTQ) is formed by oxidation of the indole ring of a tryptophan to form tryptophylquinone followed by covalent cross-linking with another tryptophan residue.

The protein resides in the periplasm. The catalysed reaction is 2 oxidized [amicyanin] + methylamine + H2O = 2 reduced [amicyanin] + formaldehyde + NH4(+) + 2 H(+). The protein operates within one-carbon metabolism; methylamine degradation; formaldehyde from methylamine: step 1/1. Methylamine dehydrogenase carries out the oxidation of methylamine. Electrons are passed from methylamine dehydrogenase to amicyanin. This chain is Methylamine dehydrogenase light chain (mauA), found in Methylobacillus flagellatus (strain ATCC 51484 / DSM 6875 / VKM B-1610 / KT).